Consider the following 1155-residue polypeptide: uncharacterized protein (1155 aa).

An N-terminal signal peptide occupies residues 1–19; that stretch reads MNKNIFITLLISSLLLLSG. Cys20 is lipidated: N-palmitoyl cysteine. Cys20 is lipidated: S-diacylglycerol cysteine. The next 4 helical transmembrane spans lie at 291–311, 395–415, 424–444, and 459–479; these read VSAI…IGNI, LGFI…FLIF, ALIT…FMLF, and ISYA…SMII.

It belongs to the TrbL/VirB6 family.

It localises to the cell membrane. This is an uncharacterized protein from Rickettsia felis (strain ATCC VR-1525 / URRWXCal2) (Rickettsia azadi).